Here is a 137-residue protein sequence, read N- to C-terminus: Peptide methionine sulfoxide reductase MsrB (137 aa).

The MsrB domain occupies 7-129 (AEELKKNLSE…NSASLRFTDG (123 aa)). Zn(2+) is bound by residues Cys-46, Cys-49, Cys-95, and Cys-98. Catalysis depends on Cys-118, which acts as the Nucleophile.

It belongs to the MsrB Met sulfoxide reductase family. Zn(2+) is required as a cofactor.

The enzyme catalyses L-methionyl-[protein] + [thioredoxin]-disulfide + H2O = L-methionyl-(R)-S-oxide-[protein] + [thioredoxin]-dithiol. In Escherichia coli (strain K12 / MC4100 / BW2952), this protein is Peptide methionine sulfoxide reductase MsrB.